A 287-amino-acid polypeptide reads, in one-letter code: Regulator of V-ATPase in vacuolar membrane protein 2 (287 aa).

In terms of assembly, component of the RAVE complex composed of rav1, rav2 and skp1.

The protein localises to the cytoplasm. The protein resides in the nucleus. In terms of biological role, component of the RAVE complex which is required for stable assembly of the vacuolar ATPase complex V-ATPase. The chain is Regulator of V-ATPase in vacuolar membrane protein 2 (rav2) from Schizosaccharomyces pombe (strain 972 / ATCC 24843) (Fission yeast).